A 579-amino-acid chain; its full sequence is Arginine--tRNA ligase (579 aa).

Residues 127-137 (PNLAKEMHVGH) carry the 'HIGH' region motif.

The protein belongs to the class-I aminoacyl-tRNA synthetase family. As to quaternary structure, monomer.

The protein resides in the cytoplasm. It carries out the reaction tRNA(Arg) + L-arginine + ATP = L-arginyl-tRNA(Arg) + AMP + diphosphate. The polypeptide is Arginine--tRNA ligase (Stutzerimonas stutzeri (strain A1501) (Pseudomonas stutzeri)).